A 475-amino-acid polypeptide reads, in one-letter code: 3-isopropylmalate dehydratase large subunit (475 aa).

The [4Fe-4S] cluster site is built by C349, C409, and C412.

It belongs to the aconitase/IPM isomerase family. LeuC type 1 subfamily. As to quaternary structure, heterodimer of LeuC and LeuD. Requires [4Fe-4S] cluster as cofactor.

It catalyses the reaction (2R,3S)-3-isopropylmalate = (2S)-2-isopropylmalate. The protein operates within amino-acid biosynthesis; L-leucine biosynthesis; L-leucine from 3-methyl-2-oxobutanoate: step 2/4. In terms of biological role, catalyzes the isomerization between 2-isopropylmalate and 3-isopropylmalate, via the formation of 2-isopropylmaleate. The polypeptide is 3-isopropylmalate dehydratase large subunit (Cereibacter sphaeroides (strain KD131 / KCTC 12085) (Rhodobacter sphaeroides)).